Reading from the N-terminus, the 287-residue chain is NAD kinase (287 aa).

The active-site Proton acceptor is the Asp66. NAD(+)-binding positions include 66-67, 137-138, Arg148, Arg165, Asp167, and 178-183; these read DG, ND, and TAYSMS.

This sequence belongs to the NAD kinase family. A divalent metal cation serves as cofactor.

It localises to the cytoplasm. The catalysed reaction is NAD(+) + ATP = ADP + NADP(+) + H(+). Its function is as follows. Involved in the regulation of the intracellular balance of NAD and NADP, and is a key enzyme in the biosynthesis of NADP. Catalyzes specifically the phosphorylation on 2'-hydroxyl of the adenosine moiety of NAD to yield NADP. The sequence is that of NAD kinase from Chlorobium limicola (strain DSM 245 / NBRC 103803 / 6330).